The chain runs to 298 residues: Glyoxalase domain-containing protein 4 (298 aa).

The VOC 1 domain maps to 5-130 (RALHFVFKVK…GGYKFYLQDR (126 aa)). An N6-succinyllysine modification is found at Lys109. The residue at position 131 (Ser131) is a Phosphoserine. Residues 137–258 (PVLKVTLAVS…DGHEICFVGD (122 aa)) enclose the VOC 2 domain. Position 273 is an N6-succinyllysine (Lys273).

It belongs to the glyoxalase I family. Interacts with NUDT9.

It is found in the mitochondrion. This Mus musculus (Mouse) protein is Glyoxalase domain-containing protein 4 (Glod4).